A 141-amino-acid chain; its full sequence is Calcitonin (141 aa).

The first 25 residues, 1-25 (MGFQKFSPFLALSILVLLQAGSLHA), serve as a signal peptide directing secretion. A propeptide spanning residues 26 to 82 (APFRSALESSPADPATLSEDEARLLLAALVQDYVQMKASELEQEQEREGSSLDSPRS) is cleaved from the precursor. Ser43 carries the phosphoserine modification. Disordered stretches follow at residues 64–85 (SELE…SKRC) and 111–141 (IGVG…QNAN). Cys85 and Cys91 are joined by a disulfide. Proline amide is present on Pro116. Over residues 118 to 132 (KKRDMSSDLERDHRP) the composition is skewed to basic and acidic residues.

It belongs to the calcitonin family.

Its subcellular location is the secreted. In terms of biological role, calcitonin is a peptide hormone that causes a rapid but short-lived drop in the level of calcium and phosphate in blood by promoting the incorporation of those ions in the bones. Calcitonin function is mediated by the calcitonin receptor/CALCR and the CALCR-RAMP2 (AMYR2) receptor complex. Its function is as follows. Katacalcin is a potent plasma calcium-lowering peptide. The sequence is that of Calcitonin from Homo sapiens (Human).